The primary structure comprises 179 residues: Ribosome-recycling factor (179 aa).

It belongs to the RRF family.

It is found in the cytoplasm. Functionally, responsible for the release of ribosomes from messenger RNA at the termination of protein biosynthesis. May increase the efficiency of translation by recycling ribosomes from one round of translation to another. This Chlamydia trachomatis serovar A (strain ATCC VR-571B / DSM 19440 / HAR-13) protein is Ribosome-recycling factor.